A 318-amino-acid chain; its full sequence is Biotin synthase (318 aa).

The Radical SAM core domain maps to 44–270; sequence LCGDAVNLCS…INPTANIRLA (227 aa). Cys-62, Cys-66, and Cys-69 together coordinate [4Fe-4S] cluster. Positions 106, 138, 198, and 268 each coordinate [2Fe-2S] cluster.

This sequence belongs to the radical SAM superfamily. Biotin synthase family. As to quaternary structure, homodimer. Requires [4Fe-4S] cluster as cofactor. [2Fe-2S] cluster serves as cofactor.

The catalysed reaction is (4R,5S)-dethiobiotin + (sulfur carrier)-SH + 2 reduced [2Fe-2S]-[ferredoxin] + 2 S-adenosyl-L-methionine = (sulfur carrier)-H + biotin + 2 5'-deoxyadenosine + 2 L-methionine + 2 oxidized [2Fe-2S]-[ferredoxin]. Its pathway is cofactor biosynthesis; biotin biosynthesis; biotin from 7,8-diaminononanoate: step 2/2. Catalyzes the conversion of dethiobiotin (DTB) to biotin by the insertion of a sulfur atom into dethiobiotin via a radical-based mechanism. This is Biotin synthase from Alkaliphilus metalliredigens (strain QYMF).